The chain runs to 112 residues: Protein BEX3 (112 aa).

The tract at residues 1 to 45 (MANIHQENEEMEQPVQNGEEDRPLGGGEGHQPERNHRRGQARRLA) is disordered. An interaction with p75NTR/NGFR region spans residues 69–94 (EIFMEEMREIRRKLRELQLRNCLRIL). An interaction with 14-3-3 epsilon region spans residues 69–112 (EIFMEEMREIRRKLRELQLRNCLRILMGELSNHHDHHDEFCLMP). The short motif at 78–88 (IRRKLRELQLR) is the Nuclear export signal element. The tract at residues 101 to 105 (HHDHH) is his cluster. Residue cysteine 109 coordinates Zn(2+).

Belongs to the BEX family. Self-associates. Binds to the DEATH domain of p75NTR/NGFR. Interacts with 14-3-3 epsilon (YWHAE). Interacts with DIABLO/SMAC. In terms of processing, ubiquitinated. Degraded by the proteasome.

The protein resides in the nucleus. Its subcellular location is the cytoplasm. The protein localises to the cytosol. Its function is as follows. May be a signaling adapter molecule involved in NGFR/p75NTR-mediated apoptosis induced by NGF. Plays a role in zinc-triggered neuronal death. In absence of reductive stress, acts as a pseudosubstrate for the CRL2(FEM1B) complex: associates with FEM1B via zinc, thereby preventing association between FEM1B and its substrates. This Bos taurus (Bovine) protein is Protein BEX3.